Reading from the N-terminus, the 860-residue chain is Valine--tRNA ligase (860 aa).

A 'HIGH' region motif is present at residues Pro53–His63. Positions Lys527 to Ser531 match the 'KMSKS' region motif. ATP is bound at residue Lys530. The stretch at Gln794–Lys860 forms a coiled coil.

The protein belongs to the class-I aminoacyl-tRNA synthetase family. ValS type 1 subfamily. In terms of assembly, monomer.

It is found in the cytoplasm. The catalysed reaction is tRNA(Val) + L-valine + ATP = L-valyl-tRNA(Val) + AMP + diphosphate. Its function is as follows. Catalyzes the attachment of valine to tRNA(Val). As ValRS can inadvertently accommodate and process structurally similar amino acids such as threonine, to avoid such errors, it has a 'posttransfer' editing activity that hydrolyzes mischarged Thr-tRNA(Val) in a tRNA-dependent manner. The protein is Valine--tRNA ligase of Mycoplasmoides gallisepticum (strain R(low / passage 15 / clone 2)) (Mycoplasma gallisepticum).